Reading from the N-terminus, the 196-residue chain is uncharacterized protein (196 aa).

To H.influenzae HI_0431.

This is an uncharacterized protein from Salmonella typhi.